A 315-amino-acid chain; its full sequence is Protein ADP-ribosyltransferase (315 aa).

One can recognise a Deacetylase sirtuin-type domain in the interval 13-299; the sequence is LMDEKTKQAE…TTALRNDSTT (287 aa). Residues alanine 40, 123 to 126, and glutamine 143 contribute to the NAD(+) site; that span reads TNAD. Positions 151, 155, 186, and 189 each coordinate Zn(2+). NAD(+) contacts are provided by residues 238–240, asparagine 264, tyrosine 268, and isoleucine 285; that span reads YTT.

Belongs to the sirtuin family. Class M subfamily. It depends on Zn(2+) as a cofactor.

The catalysed reaction is L-aspartyl-[protein] + NAD(+) = 4-O-(ADP-D-ribosyl)-L-aspartyl-[protein] + nicotinamide. With respect to regulation, is inhibited by Tenovin-6 in vitro, but not by nicotinamide. In terms of biological role, catalyzes specifically the mono-ADP-ribosylation of GcvH-L (SAV0324). This activity is dependent on prior lipoylation of the target protein. May be involved in the modulation of the response to host-derived oxidative stress. In contrast to other sirtuin classes, lacks protein deacylase activity, being unable to catalyze delipoylation, debiotinylation, deacetylation and desuccinylation of proteins. In Staphylococcus aureus (strain Mu50 / ATCC 700699), this protein is Protein ADP-ribosyltransferase.